Reading from the N-terminus, the 1402-residue chain is Baculoviral IAP repeat-containing protein 1g (1402 aa).

BIR repeat units follow at residues 60–127 (EAKR…CEFL), 159–227 (EEAR…CEFL), and 278–345 (EELR…CVFL). 4 residues coordinate Zn(2+): cysteine 315, cysteine 318, histidine 335, and cysteine 342. In terms of domain architecture, NACHT spans 464–759 (SVMCVEGEAG…EFLAAVRLTE (296 aa)). Residue lysine 476 coordinates ATP.

In terms of biological role, prevents motor-neuron apoptosis induced by a variety of signals. The protein is Baculoviral IAP repeat-containing protein 1g (Naip7) of Mus musculus (Mouse).